The following is a 245-amino-acid chain: E3 ubiquitin-protein ligase RNF138 (245 aa).

The residue at position 2 (A2) is an N-acetylalanine. Residues 18-58 form an RING-type zinc finger; it reads CPVCQEVLKTPVRTTACQHVFCRKCFLTAMRESGAHCPLCR. The Zn(2+) site is built by C86, C89, H101, and C105. A C2HC RNF-type zinc finger spans residues 86-105; it reads CRCCAKQIKFYRMRHHYKSC. The segment at 125 to 154 is disordered; sequence QDSVGNSNRSETSTSDNTETYQENTSSSGH. Position 142 is a phosphothreonine (T142). C2H2-type zinc fingers lie at residues 157 to 180 and 187 to 215; these read FKCPLCQESNFTRQRLLDHCNSNH and VTCPICVSLPWGDPSQITRNFVSHLNQRH. In terms of domain architecture, UIM spans 225–243; sequence LQLDEETQYQTAVEESFQV.

Interacts with NLK. Interacts with XRCC5/Ku80. Interacts with RBBP8/CtIP. Auto-ubiquitinated.

It is found in the chromosome. The catalysed reaction is S-ubiquitinyl-[E2 ubiquitin-conjugating enzyme]-L-cysteine + [acceptor protein]-L-lysine = [E2 ubiquitin-conjugating enzyme]-L-cysteine + N(6)-ubiquitinyl-[acceptor protein]-L-lysine.. Its pathway is protein modification; protein ubiquitination. Its function is as follows. E3 ubiquitin-protein ligase involved in DNA damage response by promoting DNA resection and homologous recombination. Recruited to sites of double-strand breaks following DNA damage and specifically promotes double-strand break repair via homologous recombination. Two different, non-exclusive, mechanisms have been proposed. According to a report, regulates the choice of double-strand break repair by favoring homologous recombination over non-homologous end joining (NHEJ): acts by mediating ubiquitination of XRCC5/Ku80, leading to remove the Ku complex from DNA breaks, thereby promoting homologous recombination. According to another report, cooperates with UBE2Ds E2 ubiquitin ligases (UBE2D1, UBE2D2, UBE2D3 or UBE2D4) to promote homologous recombination by mediating ubiquitination of RBBP8/CtIP. Together with NLK, involved in the ubiquitination and degradation of TCF/LEF. Also exhibits auto-ubiquitination activity in combination with UBE2K. May act as a negative regulator in the Wnt/beta-catenin-mediated signaling pathway. The chain is E3 ubiquitin-protein ligase RNF138 from Homo sapiens (Human).